Here is a 550-residue protein sequence, read N- to C-terminus: Rhodopsin kinase grk7-b (550 aa).

The segment at 22–45 (SSEGDAKELQKRRKSLSLPPPDVS) is disordered. At serine 36 the chain carries Phosphoserine. Residues 57 to 174 (YQSICVEQPI…QNSPFYDRFL (118 aa)) enclose the RGS domain. One can recognise a Protein kinase domain in the interval 189–451 (FYEFRILGKG…DDDPRKHAFF (263 aa)). ATP-binding positions include 195 to 203 (LGKGGFGEV) and lysine 218. Aspartate 314 acts as the Proton acceptor in catalysis. Positions 452-517 (KSINFQRLEA…GAVPISWQKE (66 aa)) constitute an AGC-kinase C-terminal domain. Serine 487 carries the post-translational modification Phosphoserine. The segment at 531–550 (SREVTGGGNSGEKSGVCSIL) is disordered. Position 547 is a cysteine methyl ester (cysteine 547). Residue cysteine 547 is the site of S-geranylgeranyl cysteine attachment. A propeptide spans 548-550 (SIL) (removed in mature form).

The protein belongs to the protein kinase superfamily. AGC Ser/Thr protein kinase family. GPRK subfamily. Post-translationally, autophosphorylated in vitro at Ser-487. Phosphorylation at Ser-36 is regulated by light and activated by cAMP. As to expression, retina, cones.

The protein localises to the membrane. The enzyme catalyses L-threonyl-[rhodopsin] + ATP = O-phospho-L-threonyl-[rhodopsin] + ADP + H(+). It carries out the reaction L-seryl-[rhodopsin] + ATP = O-phospho-L-seryl-[rhodopsin] + ADP + H(+). Its function is as follows. Retina-specific kinase involved in the shutoff of the photoresponse and adaptation to changing light conditions via cone opsin phosphorylation, including rhodopsin (RHO). This Xenopus laevis (African clawed frog) protein is Rhodopsin kinase grk7-b (grk7-b).